Reading from the N-terminus, the 244-residue chain is ATP synthase subunit a, chloroplastic (244 aa).

5 helical membrane passes run 35–55 (QVLITSWVVIAILLGSAAIAV), 92–112 (VPFIGTLFLFIFVSNWSGALL), 131–151 (INTTVALALLTSVAYFYAGIT), 196–216 (LVVVVLVSLVPLVVPIPVMFL), and 217–237 (GLFTSGIQALIFATLAAAYIG).

The protein belongs to the ATPase A chain family. In terms of assembly, F-type ATPases have 2 components, CF(1) - the catalytic core - and CF(0) - the membrane proton channel. CF(1) has five subunits: alpha(3), beta(3), gamma(1), delta(1), epsilon(1). CF(0) has four main subunits: a, b, b' and c.

It is found in the plastid. The protein resides in the chloroplast thylakoid membrane. Key component of the proton channel; it plays a direct role in the translocation of protons across the membrane. The chain is ATP synthase subunit a, chloroplastic from Coffea arabica (Arabian coffee).